The chain runs to 320 residues: Lipoyl synthase (320 aa).

Positions 1–24 are enriched in basic and acidic residues; that stretch reads MIGKLVRDLKIPDQRHPEKAHRPD. A disordered region spans residues 1-30; it reads MIGKLVRDLKIPDQRHPEKAHRPDNVQPKK. Residues Cys60, Cys65, Cys71, Cys86, Cys90, Cys93, and Ser300 each coordinate [4Fe-4S] cluster. One can recognise a Radical SAM core domain in the interval 72-289; sequence WSQGHATMMI…EKAAYGKGFL (218 aa).

The protein belongs to the radical SAM superfamily. Lipoyl synthase family. Requires [4Fe-4S] cluster as cofactor.

It is found in the cytoplasm. It carries out the reaction [[Fe-S] cluster scaffold protein carrying a second [4Fe-4S](2+) cluster] + N(6)-octanoyl-L-lysyl-[protein] + 2 oxidized [2Fe-2S]-[ferredoxin] + 2 S-adenosyl-L-methionine + 4 H(+) = [[Fe-S] cluster scaffold protein] + N(6)-[(R)-dihydrolipoyl]-L-lysyl-[protein] + 4 Fe(3+) + 2 hydrogen sulfide + 2 5'-deoxyadenosine + 2 L-methionine + 2 reduced [2Fe-2S]-[ferredoxin]. It participates in protein modification; protein lipoylation via endogenous pathway; protein N(6)-(lipoyl)lysine from octanoyl-[acyl-carrier-protein]: step 2/2. Its function is as follows. Catalyzes the radical-mediated insertion of two sulfur atoms into the C-6 and C-8 positions of the octanoyl moiety bound to the lipoyl domains of lipoate-dependent enzymes, thereby converting the octanoylated domains into lipoylated derivatives. This Cereibacter sphaeroides (strain ATCC 17029 / ATH 2.4.9) (Rhodobacter sphaeroides) protein is Lipoyl synthase.